Here is a 390-residue protein sequence, read N- to C-terminus: cAMP-dependent protein kinase regulatory subunit (390 aa).

Positions 1–17 (MSASGFTSPFGANSNPF) are enriched in polar residues. The tract at residues 1–81 (MSASGFTSPF…RPQNPDGYPA (81 aa)) is disordered. The interval 1 to 129 (MSASGFTSPF…RLKKAIQGNF (129 aa)) is dimerization and phosphorylation. Serine 90 carries the post-translational modification Phosphoserine. Residues 130 to 261 (LFSH…EEVP), glutamate 208, arginine 217, 262 to 383 (ILST…GVEE), glutamate 329, and arginine 338 each bind 3',5'-cyclic AMP.

The protein belongs to the cAMP-dependent kinase regulatory chain family. Tetramer, composed of 2 regulatory (R) and 2 catalytic (C) subunits. In the presence of cAMP it dissociates into 2 active monomeric C subunits and an R dimer.

The protein is cAMP-dependent protein kinase regulatory subunit (SUM1) of Pyricularia oryzae (strain 70-15 / ATCC MYA-4617 / FGSC 8958) (Rice blast fungus).